The sequence spans 130 residues: Anti-adapter protein IraD (130 aa).

The protein belongs to the GpW/Gp25 family. IraD subfamily. As to quaternary structure, interacts with RssB.

It localises to the cytoplasm. In terms of biological role, inhibits RpoS proteolysis by regulating RssB activity, thereby increasing the stability of the sigma stress factor RpoS during oxidative stress. Its effect on RpoS stability is due to its interaction with RssB, which probably blocks the interaction of RssB with RpoS, and the consequent delivery of the RssB-RpoS complex to the ClpXP protein degradation pathway. The sequence is that of Anti-adapter protein IraD from Escherichia coli O157:H7.